Reading from the N-terminus, the 307-residue chain is Leucine-rich repeat-containing protein 59 (307 aa).

At M1 the chain carries N-acetylmethionine. T2 is subject to N-acetylthreonine; in Leucine-rich repeat-containing protein 59, N-terminally processed. Over 2–244 the chain is Cytoplasmic; the sequence is TKAGSKGGNL…KPPPRKHTRS (243 aa). LRR repeat units follow at residues 10-31, 40-62, 63-84, 86-107, and 109-128; these read NLRD…NEVP, KATV…CGLT, HLVK…FGRL, NLQH…FAQL, and NLKW…AKVA. 2 positions are modified to phosphoserine: S23 and S25. Residue K73 is modified to N6-succinyllysine. N6-acetyllysine is present on K135. The stretch at 148–216 forms a coiled coil; sequence MKAVQADQER…KASKREQEKK (69 aa). Residues 150-241 form a disordered region; that stretch reads AVQADQERER…RPRKPPPRKH (92 aa). Residues 154–221 are compositionally biased toward basic and acidic residues; that stretch reads DQERERQRRL…EQEKKPKKEA (68 aa). The span at 229–241 shows a compositional bias: basic residues; it reads SGSRPRKPPPRKH. Residues 245–265 traverse the membrane as a helical segment; that stretch reads WAVLKVLLLLLLLCVAGGLVV. Over 266–307 the chain is Lumenal; the sequence is CRVTGLHQQPLCTSVNTIYDNAVQGLRHHEILQWVLQTDSQQ.

As to quaternary structure, can form homodimers. Interacts with SGO1. Interacts with FGF1.

Its subcellular location is the microsome membrane. It localises to the endoplasmic reticulum membrane. The protein resides in the nucleus envelope. Functionally, required for nuclear import of FGF1, but not that of FGF2. Might regulate nuclear import of exogenous FGF1 by facilitating interaction with the nuclear import machinery and by transporting cytosolic FGF1 to, and possibly through, the nuclear pores. The polypeptide is Leucine-rich repeat-containing protein 59 (Lrrc59) (Mus musculus (Mouse)).